The chain runs to 749 residues: Triacylglycerol lipase 5 (749 aa).

The short motif at histidine 54–aspartate 59 is the HXXXXD acyltransferase motif element. A PNPLA domain is found at leucine 183–serine 388. The GXSXG motif lies at glycine 214–glycine 218. Residue serine 216 is the Nucleophile of the active site. Asparagine 270, asparagine 289, asparagine 297, asparagine 304, and asparagine 321 each carry an N-linked (GlcNAc...) asparagine glycan. Catalysis depends on aspartate 375, which acts as the Proton acceptor. Residues asparagine 474 and asparagine 589 are each glycosylated (N-linked (GlcNAc...) asparagine). Positions isoleucine 585–alanine 643 are disordered. The segment covering proline 623–serine 633 has biased composition (low complexity). A compositionally biased stretch (polar residues) spans phenylalanine 634–alanine 643. The residue at position 645 (serine 645) is a Phosphoserine. Residues asparagine 680, asparagine 714, and asparagine 742 are each glycosylated (N-linked (GlcNAc...) asparagine).

It localises to the lipid droplet. The enzyme catalyses a triacylglycerol + H2O = a diacylglycerol + a fatty acid + H(+). It carries out the reaction 1-(9Z-octadecenoyl)-sn-glycero-3-phosphate + (9Z)-octadecenoyl-CoA = 1,2-di-(9Z-octadecenoyl)-sn-glycero-3-phosphate + CoA. The catalysed reaction is 1-(9Z-octadecenoyl)-sn-glycero-3-phosphate + hexadecanoyl-CoA = 1-hexadecanoyl-2-(9Z-octadecenoyl)-sn-glycero-3-phosphate + CoA. Its activity is regulated as follows. Loses its lipolytic activity in cells lacking nonpolar lipids, but retains its side activity as lysophospholipid acyltransferase. Functionally, lipid particle-localized triacylglycerol (TAG) lipase. The lipid droplet/particle is a lipid storage compartment which serves as a depot of energy and building blocks for membrane lipid biosynthesis. Involved in the mobilization of the non-polar storage lipids triacylglycerols (TAGs) from lipid particles by hydrolysis of TAGs, releasing and supplying specific fatty acids to the appropriate metabolic pathways. Also catalyzes the acylation of lysophosphatidic acid (LPA). This Saccharomyces cerevisiae (strain ATCC 204508 / S288c) (Baker's yeast) protein is Triacylglycerol lipase 5 (TGL5).